Consider the following 355-residue polypeptide: UDP-N-acetylglucosamine--N-acetylmuramyl-(pentapeptide) pyrophosphoryl-undecaprenol N-acetylglucosamine transferase (355 aa).

UDP-N-acetyl-alpha-D-glucosamine is bound by residues T15–G17, N127, R163, S191, I244, A263–E268, and Q288.

It belongs to the glycosyltransferase 28 family. MurG subfamily.

It is found in the cell inner membrane. The catalysed reaction is di-trans,octa-cis-undecaprenyl diphospho-N-acetyl-alpha-D-muramoyl-L-alanyl-D-glutamyl-meso-2,6-diaminopimeloyl-D-alanyl-D-alanine + UDP-N-acetyl-alpha-D-glucosamine = di-trans,octa-cis-undecaprenyl diphospho-[N-acetyl-alpha-D-glucosaminyl-(1-&gt;4)]-N-acetyl-alpha-D-muramoyl-L-alanyl-D-glutamyl-meso-2,6-diaminopimeloyl-D-alanyl-D-alanine + UDP + H(+). It participates in cell wall biogenesis; peptidoglycan biosynthesis. Functionally, cell wall formation. Catalyzes the transfer of a GlcNAc subunit on undecaprenyl-pyrophosphoryl-MurNAc-pentapeptide (lipid intermediate I) to form undecaprenyl-pyrophosphoryl-MurNAc-(pentapeptide)GlcNAc (lipid intermediate II). This Cronobacter sakazakii (strain ATCC BAA-894) (Enterobacter sakazakii) protein is UDP-N-acetylglucosamine--N-acetylmuramyl-(pentapeptide) pyrophosphoryl-undecaprenol N-acetylglucosamine transferase.